A 127-amino-acid polypeptide reads, in one-letter code: MRHRNSGRSFSRTSSHRKAMFSNMCCSLIEHELIRTTLPKAKDLRRYIEPLITVSKSDSVASRRRAFNILRSKSAVGKLFTDLGPRFAKRPGGYIRIIKCGYRDGDNAPMAIVELMDRPVSSDDTEE.

The protein belongs to the bacterial ribosomal protein bL17 family. As to quaternary structure, part of the 50S ribosomal subunit. Contacts protein L32.

The polypeptide is Large ribosomal subunit protein bL17 (Legionella pneumophila (strain Paris)).